The chain runs to 272 residues: Glutamate racemase (272 aa).

Residues 12–13 (DS) and 44–45 (YG) contribute to the substrate site. Cys75 (proton donor/acceptor) is an active-site residue. 76-77 (NT) is a binding site for substrate. Cys185 acts as the Proton donor/acceptor in catalysis. 186–187 (TH) contributes to the substrate binding site.

Belongs to the aspartate/glutamate racemases family.

It carries out the reaction L-glutamate = D-glutamate. The protein operates within cell wall biogenesis; peptidoglycan biosynthesis. In terms of biological role, provides the (R)-glutamate required for cell wall biosynthesis. In Mycobacterium leprae (strain TN), this protein is Glutamate racemase.